A 319-amino-acid polypeptide reads, in one-letter code: Ankyrin repeat domain-containing protein 1 (319 aa).

Residues 63-89 adopt a coiled-coil conformation; the sequence is EKQLEAELKKKKLEQRSKLENLEDLEI. ANK repeat units lie at residues 152–181, 185–214, 218–247, 251–280, and 284–315; these read YKRT…QIEF, LEST…KISA, LLST…DLNA, EGDT…DLTI, and AGKT…KTSR.

As to quaternary structure, interacts with TTN/titin and YBX1.

It is found in the nucleus. Functionally, may play an important role in endothelial cell activation. May act as a nuclear transcription factor that negatively regulates the expression of cardiac genes. This Oryctolagus cuniculus (Rabbit) protein is Ankyrin repeat domain-containing protein 1 (ANKRD1).